The primary structure comprises 307 residues: Protein Y (307 aa).

It belongs to the ATP-dependent AMP-binding enzyme family.

Its pathway is antibiotic biosynthesis; candicidin biosynthesis. May be a p-aminobenzoic acid-CoA ligase that activates PabA to start the biosynthesis of candicidin. The sequence is that of Protein Y from Streptomyces griseus.